The following is a 273-amino-acid chain: Pyrroline-5-carboxylate reductase (273 aa).

Belongs to the pyrroline-5-carboxylate reductase family.

It is found in the cytoplasm. The enzyme catalyses L-proline + NADP(+) = (S)-1-pyrroline-5-carboxylate + NADPH + 2 H(+). It catalyses the reaction L-proline + NAD(+) = (S)-1-pyrroline-5-carboxylate + NADH + 2 H(+). The protein operates within amino-acid biosynthesis; L-proline biosynthesis; L-proline from L-glutamate 5-semialdehyde: step 1/1. This chain is Pyrroline-5-carboxylate reductase (PROC), found in Pisum sativum (Garden pea).